A 428-amino-acid chain; its full sequence is Enolase (428 aa).

Residue Gln-163 participates in (2R)-2-phosphoglycerate binding. The Proton donor role is filled by Glu-205. The Mg(2+) site is built by Asp-242, Glu-285, and Asp-311. Residues Lys-336, Arg-365, Ser-366, and Lys-387 each contribute to the (2R)-2-phosphoglycerate site. The active-site Proton acceptor is the Lys-336.

Belongs to the enolase family. It depends on Mg(2+) as a cofactor.

Its subcellular location is the cytoplasm. The protein resides in the secreted. The protein localises to the cell surface. It catalyses the reaction (2R)-2-phosphoglycerate = phosphoenolpyruvate + H2O. Its pathway is carbohydrate degradation; glycolysis; pyruvate from D-glyceraldehyde 3-phosphate: step 4/5. Catalyzes the reversible conversion of 2-phosphoglycerate (2-PG) into phosphoenolpyruvate (PEP). It is essential for the degradation of carbohydrates via glycolysis. This Desulfatibacillum aliphaticivorans protein is Enolase.